The chain runs to 876 residues: Dynein regulatory complex subunit 7 (876 aa).

2 coiled-coil regions span residues 1–33 and 258–295; these read MEVLREKVEEEEEAEREEAAERAERTEKLERVT and KFEQEQEEKRIQEIKDLEQRRLKEEEDRILEAEKAKPD. Positions 1–40 are disordered; that stretch reads MEVLREKVEEEEEAEREEAAERAERTEKLERVTKSAEVSR. Positions 17–40 are enriched in basic and acidic residues; the sequence is EEAAERAERTEKLERVTKSAEVSR. The disordered stretch occupies residues 385 to 412; sequence SLTEEDEEGLDDDDDDVEDLGKEEEDKS. Residues 387–407 are compositionally biased toward acidic residues; that stretch reads TEEDEEGLDDDDDDVEDLGKE. Coiled coils occupy residues 679-710 and 784-809; these read QLKNEEKLSRHQAWESELEVLEILKLREEEEE and QRLIDKANLIQARFEKETQELQKKQQ.

Belongs to the DRC7 family. As to quaternary structure, component of the nexin-dynein regulatory complex (N-DRC). Interacts with TCTE1/DRC5. Interacts with DRC3 and GAS8/DRC4. As to expression, expressed in diplotene and pachytene spermytocytes, and in round and elongating spermatids (at protein level). Strongly expressed in spleen and testis, faintly expressed in kidney, ovary and thymus. In terms of tissue distribution, abundantly expressed in the testis and is weakly expressed in the brain, thymus, lung and ovary. Expressed in ciliated cells.

The protein localises to the cell projection. It is found in the cilium. It localises to the flagellum. The protein resides in the cytoplasm. Its subcellular location is the cytoskeleton. The protein localises to the cilium axoneme. It is found in the flagellum axoneme. In terms of biological role, component of the nexin-dynein regulatory complex (N-DRC) a key regulator of ciliary/flagellar motility which maintains the alignment and integrity of the distal axoneme and regulates microtubule sliding in motile axonemes. Essential for male fertility, sperm head morphogenesis and sperm flagellum formation. Not required for ciliogenesis in the brain and trachea. The polypeptide is Dynein regulatory complex subunit 7 (Drc7) (Mus musculus (Mouse)).